We begin with the raw amino-acid sequence, 138 residues long: Ribosome maturation factor RimP (138 aa).

This sequence belongs to the RimP family.

The protein resides in the cytoplasm. In terms of biological role, required for maturation of 30S ribosomal subunits. The polypeptide is Ribosome maturation factor RimP (Campylobacter curvus (strain 525.92)).